The following is a 343-amino-acid chain: E3 ubiquitin-protein ligase RNF113A (343 aa).

At alanine 2 the chain carries N-acetylalanine. The tract at residues 2–60 (AEQLSPGKAVDQVCTFLFKKPGRKGAAGRRKRPACDPEPGESGSSSDEGCTVVRPEKKR) is important for interaction with SNRNP200/BRR2. Residue serine 6 is modified to Phosphoserine. The span at 22–33 (PGRKGAAGRRKR) shows a compositional bias: basic residues. The tract at residues 22-96 (PGRKGAAGRR…EEEENEPESL (75 aa)) is disordered. A compositionally biased stretch (low complexity) spans 41-50 (GESGSSSDEG). The segment at 50-61 (GCTVVRPEKKRV) is important for interaction with CXCR4. Phosphoserine is present on residues serine 84 and serine 85. A compositionally biased stretch (acidic residues) spans 84–93 (SSEEEEENEP). The segment at 196–224 (DYQPDICKDYKETGFCGFGDSCKFLHDRS) adopts a C3H1-type zinc-finger fold. Position 253 is a phosphoserine (serine 253). The RING-type zinc finger occupies 262 to 300 (CFICRQSFQNPVVTKCRHYFCESCALQHFRTTPRCYVCD). The segment at 322-343 (ATGEGGASDLPEDPDEDAIPIT) is disordered. Acidic residues predominate over residues 331–343 (LPEDPDEDAIPIT).

As to quaternary structure, component of pre-catalytic and catalytic spliceosome complexes. Interacts (via N-terminus) with the spliceosome subunit SNRNP200/BRR2. Component of the minor spliceosome, which splices U12-type introns. Within this complex, interacts with SCNM1 and CRIPT. In terms of tissue distribution, ubiquitous.

It is found in the nucleus. The protein resides in the nucleus speckle. It carries out the reaction S-ubiquitinyl-[E2 ubiquitin-conjugating enzyme]-L-cysteine + [acceptor protein]-L-lysine = [E2 ubiquitin-conjugating enzyme]-L-cysteine + N(6)-ubiquitinyl-[acceptor protein]-L-lysine.. It functions in the pathway protein modification; protein ubiquitination. Required for pre-mRNA splicing as component of the spliceosome. As a component of the minor spliceosome, involved in the splicing of U12-type introns in pre-mRNAs. E3 ubiquitin-protein ligase that catalyzes the transfer of ubiquitin onto target proteins. Catalyzes polyubiquitination of SNRNP200/BRR2 with non-canonical 'Lys-63'-linked polyubiquitin chains. Plays a role in DNA repair via its role in the synthesis of 'Lys-63'-linked polyubiquitin chains that recruit ALKBH3 and the ASCC complex to sites of DNA damage by alkylating agents. Ubiquitinates CXCR4, leading to its degradation, and thereby contributes to the termination of CXCR4 signaling. This chain is E3 ubiquitin-protein ligase RNF113A (RNF113A), found in Homo sapiens (Human).